Here is a 296-residue protein sequence, read N- to C-terminus: MTKEIPKINNEYLKEKRKKQRIQQRRVQRMIVGILVVIVLLILVYMFTPISHIKSADIKGNHYVSKQDILKELDIQNHPRIYAYSSDDAETRLKQNELIDEVTIEKGLFNPIEVNVKEHTIIAITTEKSRVVPMIENGKVLKDYKQEVPNEAPYIEGFKGAEKRNLIDALQKMDRTTRAQISEIVSAPQKDQPHLIKLFMRDGIEVVGNTNTIAEKLKYYPSMSQALEKDETGKLKKSGFIDLSVGATFIPYDNVNNGQTSSASAKEVQSGTASEDKAKDDLQKALNKIKDEESSE.

The Cytoplasmic portion of the chain corresponds to 1-29 (MTKEIPKINNEYLKEKRKKQRIQQRRVQR). Residues 30–50 (MIVGILVVIVLLILVYMFTPI) form a helical membrane-spanning segment. The 69-residue stretch at 51–119 (SHIKSADIKG…NPIEVNVKEH (69 aa)) folds into the POTRA domain. At 51-296 (SHIKSADIKG…NKIKDEESSE (246 aa)) the chain is on the extracellular side. A compositionally biased stretch (polar residues) spans 256 to 273 (NNGQTSSASAKEVQSGTA). The segment at 256 to 296 (NNGQTSSASAKEVQSGTASEDKAKDDLQKALNKIKDEESSE) is disordered. Over residues 274 to 296 (SEDKAKDDLQKALNKIKDEESSE) the composition is skewed to basic and acidic residues.

This sequence belongs to the FtsQ/DivIB family. DivIB subfamily.

The protein localises to the cell membrane. Its function is as follows. Cell division protein that may be involved in stabilizing or promoting the assembly of the division complex. The sequence is that of Cell division protein DivIB from Staphylococcus pseudintermedius (strain HKU10-03).